The sequence spans 365 residues: MAKQTPLYDQHVACGARMVDFHGWMMPLHYGSQIDEHHIVRQDAGMFDVSHMTIVDLHGARTREFLRYLLANDVAKLTQPGKALYTAMLNASGGVIDDLIVYFLREDYFRLVVNSATREKDLNWIIQHAEPYQVDVTVRDDLALVAVQGPTAQQKVATLLTSEQQQAIAGMKPFFGIQADDLFIATTGYTGEAGYEIALPKERVVEFWQQLLAAGVKPAGLGARDTLRLEAGMNLYGQEMDEGVSPLAANMGWTVAWLPEDRQFIGREALEQQRANGTEQLVGLIMTEKGVLRNELPVHFSDDSGNQHVGVITSGSFSPTLGFSIALARVPAGIGENAVVQIRNREMPVRVTKPGFVRAGKPVAL.

It belongs to the GcvT family. In terms of assembly, the glycine cleavage system is composed of four proteins: P, T, L and H.

It carries out the reaction N(6)-[(R)-S(8)-aminomethyldihydrolipoyl]-L-lysyl-[protein] + (6S)-5,6,7,8-tetrahydrofolate = N(6)-[(R)-dihydrolipoyl]-L-lysyl-[protein] + (6R)-5,10-methylene-5,6,7,8-tetrahydrofolate + NH4(+). In terms of biological role, the glycine cleavage system catalyzes the degradation of glycine. In Yersinia enterocolitica serotype O:8 / biotype 1B (strain NCTC 13174 / 8081), this protein is Aminomethyltransferase.